Consider the following 99-residue polypeptide: Large ribosomal subunit protein bL21 (99 aa).

It belongs to the bacterial ribosomal protein bL21 family. In terms of assembly, part of the 50S ribosomal subunit. Contacts protein L20.

This protein binds to 23S rRNA in the presence of protein L20. The protein is Large ribosomal subunit protein bL21 of Mycoplasma mobile (strain ATCC 43663 / 163K / NCTC 11711) (Mesomycoplasma mobile).